The primary structure comprises 251 residues: Early E1A protein (251 aa).

The tract at residues 38–46 (ISLHNLFDV) is interaction with RB1 in competition with E2F1. The interval 74–136 (SADSGAASGD…NYVNIAEGAS (63 aa)) is interaction with UBE2I. An LXCXE motif, interaction with host RB1 and TMEM173/STING motif is present at residues 97–101 (LKCYE). The disordered stretch occupies residues 102–122 (EGLPPSGSEADEAEERAEEEE). Residues 110–122 (EADEAEERAEEEE) are compositionally biased toward acidic residues. A zinc finger lies at 150–170 (CRACDFHRGSSGNPEAMCALC). Residues 240–244 (PLNLS) carry the PXDLS motif, CTBP-binding motif. The short motif at 246–250 (KRPKS) is the Nuclear localization signal element.

This sequence belongs to the adenoviridae E1A protein family. As to quaternary structure, interacts with host UBE2I; this interaction interferes with polySUMOylation. Interacts with host RB1; this interaction induces the aberrant dissociation of RB1-E2F1 complex thereby disrupting the activity of RB1 and activating E2F1-regulated genes. Interacts with host ATF7; the interaction enhances ATF7-mediated viral transactivation activity which requires the zinc binding domains of both proteins. Isoform early E1A 32 kDa protein and isoform early E1A 26 kDa protein interact (via N-terminus) with CUL1 and E3 ubiquitin ligase RBX1; these interactions inhibit RBX1-CUL1-dependent elongation reaction of ubiquitin chains and attenuate ubiquitination of SCF(FBXW7) target proteins. Interacts (via PXLXP motif) with host ZMYND11/BS69 (via MYND-type zinc finger); this interaction inhibits E1A mediated transactivation. Interacts with host EP300; this interaction stimulates the acetylation of RB1 by recruiting EP300 and RB1 into a multimeric-protein complex. Interacts with host CTBP1 and CTBP2; this interaction seems to potentiate viral replication. Interacts with host DCAF7. Interacts with host DYRK1A. Interacts with host KPNA4; this interaction allows E1A import into the host nucleus. Interacts with host EP400; this interaction stabilizes MYC. Interacts with host TBP protein; this interaction probably disrupts the TBP-TATA complex. Interacts (via LXCXE motif) with host TMEM173/STING; this interaction impairs the ability of TMEM173/STING to sense cytosolic DNA and promote the production of type I interferon (IFN-alpha and IFN-beta). Interacts (via C-terminus) with host ZBED1/hDREF (via C-terminus); the interaction is direct.

The protein resides in the host nucleus. Its function is as follows. Plays a role in viral genome replication by driving entry of quiescent cells into the cell cycle. Stimulation of progression from G1 to S phase allows the virus to efficiently use the cellular DNA replicating machinery to achieve viral genome replication. E1A protein has both transforming and trans-activating activities. Induces the disassembly of the E2F1 transcription factor from RB1 by direct competition for the same binding site on RB1, with subsequent transcriptional activation of E2F1-regulated S-phase genes and of the E2 region of the adenoviral genome. Release of E2F1 leads to the ARF-mediated inhibition of MDM2 and causes TP53/p53 to accumulate because it is not targeted for degradation by MDM2-mediated ubiquitination anymore. This increase in TP53, in turn, would arrest the cell proliferation and direct its death but this effect is counteracted by the viral protein E1B-55K. Inactivation of the ability of RB1 to arrest the cell cycle is critical for cellular transformation, uncontrolled cellular growth and proliferation induced by viral infection. Interaction with RBX1 and CUL1 inhibits ubiquitination of the proteins targeted by SCF(FBXW7) ubiquitin ligase complex, and may be linked to unregulated host cell proliferation. The tumorigenesis-restraining activity of E1A may be related to the disruption of the host CtBP-CtIP complex through the CtBP binding motif. Interaction with host TMEM173/STING impairs the ability of TMEM173/STING to sense cytosolic DNA and promote the production of type I interferon (IFN-alpha and IFN-beta). Promotes the sumoylation of host ZBED1/hDREF with SUMO1. The sequence is that of Early E1A protein from Human adenovirus F serotype 41 (HAdV-41).